A 424-amino-acid polypeptide reads, in one-letter code: Enolase (424 aa).

Residue Gln-162 participates in (2R)-2-phosphoglycerate binding. Glu-204 acts as the Proton donor in catalysis. Mg(2+) contacts are provided by Asp-241, Glu-284, and Asp-311. (2R)-2-phosphoglycerate contacts are provided by Lys-336, Arg-365, Ser-366, and Lys-387. The active-site Proton acceptor is the Lys-336.

The protein belongs to the enolase family. Mg(2+) serves as cofactor.

It localises to the cytoplasm. It is found in the secreted. The protein resides in the cell surface. It catalyses the reaction (2R)-2-phosphoglycerate = phosphoenolpyruvate + H2O. Its pathway is carbohydrate degradation; glycolysis; pyruvate from D-glyceraldehyde 3-phosphate: step 4/5. Functionally, catalyzes the reversible conversion of 2-phosphoglycerate (2-PG) into phosphoenolpyruvate (PEP). It is essential for the degradation of carbohydrates via glycolysis. This is Enolase from Agrobacterium fabrum (strain C58 / ATCC 33970) (Agrobacterium tumefaciens (strain C58)).